The primary structure comprises 141 residues: Putative nickel-responsive regulator (141 aa).

The Ni(2+) site is built by His83, His94, His96, and Cys102.

Belongs to the transcriptional regulatory CopG/NikR family. The cofactor is Ni(2+).

Its function is as follows. Transcriptional regulator. This chain is Putative nickel-responsive regulator, found in Methanopyrus kandleri (strain AV19 / DSM 6324 / JCM 9639 / NBRC 100938).